Consider the following 325-residue polypeptide: TNFAIP3-interacting protein 3 (325 aa).

Disordered regions lie at residues 1 to 30 (MAHF…STRK) and 84 to 129 (RFLS…RLNE). Over residues 17-28 (STEHKECAEPST) the composition is skewed to basic and acidic residues. The stretch at 27–265 (STRKNLMNSL…LEKQLKQMYC (239 aa)) forms a coiled coil. A ubiquitin-binding domain (UBD) region spans residues 190–248 (HEEMRTEMEVLKQQVQIYEEDFKKERSDRERLNQEKEELQQINETSQSQLNRLNSQIKA).

In terms of assembly, interacts with TNFAIP3. Interacts with polyubiquitin. As to expression, highly expressed in lung, lymph node, thymus and fetal liver. Expressed at lower levels in bone marrow, brain, kidney, spleen, leukocytes and tonsils. Could be detected in heart, salivary gland, adrenal gland, pancreas, ovary and fetal brain. High levels detected in liver, colon, small intestine, muscle, stomach, testis, placenta, thyroid, uterus, prostate, skin and PBL.

Its function is as follows. Binds to zinc finger protein TNFAIP3 and inhibits NF-kappa-B activation induced by tumor necrosis factor, Toll-like receptor 4 (TLR4), interleukin-1 and 12-O-tetradecanoylphorbol-13-acetate. Overexpression inhibits NF-kappa-B-dependent gene expression in response to lipopolysaccharide at a level downstream of TRAF6 and upstream of IKBKB. NF-kappa-B inhibition is independent of TNFAIP3 binding. This Homo sapiens (Human) protein is TNFAIP3-interacting protein 3.